Consider the following 433-residue polypeptide: Putative ankyrin repeat protein R578 (433 aa).

ANK repeat units lie at residues N166 to E195, D197 to L224, V356 to S386, and P388 to E415.

The sequence is that of Putative ankyrin repeat protein R578 from Acanthamoeba polyphaga mimivirus (APMV).